Reading from the N-terminus, the 364-residue chain is Cobalt-precorrin-5B C(1)-methyltransferase (364 aa).

This sequence belongs to the CbiD family.

It catalyses the reaction Co-precorrin-5B + S-adenosyl-L-methionine = Co-precorrin-6A + S-adenosyl-L-homocysteine. The protein operates within cofactor biosynthesis; adenosylcobalamin biosynthesis; cob(II)yrinate a,c-diamide from sirohydrochlorin (anaerobic route): step 6/10. Its function is as follows. Catalyzes the methylation of C-1 in cobalt-precorrin-5B to form cobalt-precorrin-6A. This is Cobalt-precorrin-5B C(1)-methyltransferase from Pseudomonas putida (strain GB-1).